An 80-amino-acid polypeptide reads, in one-letter code: Acyl carrier protein (80 aa).

The 79-residue stretch at 1-79 folds into the Carrier domain; the sequence is MSQEEILQKV…DAVKFIEAKK (79 aa). The residue at position 39 (Ser-39) is an O-(pantetheine 4'-phosphoryl)serine.

Belongs to the acyl carrier protein (ACP) family. 4'-phosphopantetheine is transferred from CoA to a specific serine of apo-ACP by AcpS. This modification is essential for activity because fatty acids are bound in thioester linkage to the sulfhydryl of the prosthetic group.

The protein resides in the cytoplasm. The protein operates within lipid metabolism; fatty acid biosynthesis. Its function is as follows. Carrier of the growing fatty acid chain in fatty acid biosynthesis. The protein is Acyl carrier protein of Prochlorococcus marinus (strain MIT 9515).